Consider the following 370-residue polypeptide: Ubiquitin-binding protein Rv1468c (370 aa).

The tract at residues 1 to 72 (MSFVVANTEF…QVLSAQAAAF (72 aa)) is UBA. The 93-residue stretch at 1–93 (MSFVVANTEF…AQAYAAAEAT (93 aa)) folds into the PE domain.

It belongs to the mycobacterial PE family. PGRS subfamily. In terms of assembly, interacts directly with host polyubiquitin in a UBA-dependent manner.

It localises to the secreted. It is found in the cell wall. Its subcellular location is the cell surface. Mediates direct binding of host ubiquitin (Ub) to the mycobacterial surface, which triggers host xenophagy. Interaction between Rv1468c and ubiquitin recruits autophagy receptor p62 to deliver mycobacteria into LC3-associated autophagosomes. It could be a viable evolutionary strategy adopted by M.tuberculosis to maintain long-term intracellular survival through self-controlling its intracellular bacterial loads to avoid excessive host inflammatory immune responses. The sequence is that of Ubiquitin-binding protein Rv1468c from Mycobacterium tuberculosis (strain ATCC 25618 / H37Rv).